The sequence spans 114 residues: Iron-sulfur cluster insertion protein ErpA (114 aa).

Positions 42, 106, and 108 each coordinate iron-sulfur cluster.

Belongs to the HesB/IscA family. In terms of assembly, homodimer. Iron-sulfur cluster serves as cofactor.

Required for insertion of 4Fe-4S clusters for at least IspG. This is Iron-sulfur cluster insertion protein ErpA from Sodalis glossinidius (strain morsitans).